Consider the following 133-residue polypeptide: Urease subunit beta (133 aa).

A disordered region spans residues 106-133 (VFRPNDSNQNAAVKNDAGEDNANKKGGK).

The protein belongs to the urease beta subunit family. In terms of assembly, heterotrimer of UreA (gamma), UreB (beta) and UreC (alpha) subunits. Three heterotrimers associate to form the active enzyme.

The protein localises to the cytoplasm. It catalyses the reaction urea + 2 H2O + H(+) = hydrogencarbonate + 2 NH4(+). Its pathway is nitrogen metabolism; urea degradation; CO(2) and NH(3) from urea (urease route): step 1/1. The chain is Urease subunit beta from Staphylococcus epidermidis (strain ATCC 12228 / FDA PCI 1200).